The primary structure comprises 275 residues: Translation initiation factor 2 subunit alpha (275 aa).

One can recognise an S1 motif domain in the interval glycine 12–arginine 83.

The protein belongs to the eIF-2-alpha family. Heterotrimer composed of an alpha, a beta and a gamma chain.

In terms of biological role, eIF-2 functions in the early steps of protein synthesis by forming a ternary complex with GTP and initiator tRNA. This chain is Translation initiation factor 2 subunit alpha (eif2a), found in Pyrococcus abyssi (strain GE5 / Orsay).